The sequence spans 201 residues: Urease accessory protein UreG (201 aa).

Position 11–18 (11–18 (GPVGSGKT)) interacts with GTP.

Belongs to the SIMIBI class G3E GTPase family. UreG subfamily. As to quaternary structure, homodimer. UreD, UreF and UreG form a complex that acts as a GTP-hydrolysis-dependent molecular chaperone, activating the urease apoprotein by helping to assemble the nickel containing metallocenter of UreC. The UreE protein probably delivers the nickel.

The protein resides in the cytoplasm. Facilitates the functional incorporation of the urease nickel metallocenter. This process requires GTP hydrolysis, probably effectuated by UreG. The protein is Urease accessory protein UreG of Synechococcus sp. (strain CC9605).